Reading from the N-terminus, the 189-residue chain is Selenoprotein S (189 aa).

A helical transmembrane segment spans residues 28–48 (SLLATYGWYIVFSCILLYVVF). The tract at residues 78–90 (RQEALAAARLKMQ) is VCP/p97-interacting motif (VIM). A disordered region spans residues 115-189 (KIEMWDSMQE…RRGPSSGGUG (75 aa)). Phosphoserine is present on Ser140. The span at 159 to 173 (RGGGYNPLSGEGGGA) shows a compositional bias: gly residues. Sec188 is a non-standard amino acid (selenocysteine).

The protein belongs to the selenoprotein S family. In terms of assembly, interacts with DERL1 and (via VIM motif) with VCP, suggesting that it forms a membrane complex with DERL1 that serves as a receptor for VCP. Also interacts with DERL2, DERL3 and SELENOK. The SELENOK-SELENOS complex interacts with VCP. Interacts with CCDC47. Truncated SELENOS proteins produced by failed UGA/Sec decoding are ubiquitinated by the CRL2(KLHDC2) and CRL2(KLHDC3) complexes, which recognizes the glycine (Gly) at the C-terminus of truncated SELENOS proteins. Truncated SELENOS proteins produced by failed UGA/Sec decoding are also ubiquitinated by the CRL5(KLHDC1) complex.

The protein resides in the endoplasmic reticulum membrane. It localises to the cytoplasm. Functionally, involved in the degradation process of misfolded endoplasmic reticulum (ER) luminal proteins. Participates in the transfer of misfolded proteins from the ER to the cytosol, where they are destroyed by the proteasome in a ubiquitin-dependent manner. Probably acts by serving as a linker between DERL1, which mediates the retrotranslocation of misfolded proteins into the cytosol, and the ATPase complex VCP, which mediates the translocation and ubiquitination. This chain is Selenoprotein S, found in Homo sapiens (Human).